The sequence spans 75 residues: Metallothionein-like protein 1 (75 aa).

This sequence belongs to the metallothionein superfamily. Type 15 family.

Metallothioneins have a high content of cysteine residues that bind various heavy metals. The sequence is that of Metallothionein-like protein 1 from Cicer arietinum (Chickpea).